Reading from the N-terminus, the 87-residue chain is HssA/B-like protein 55 (87 aa).

Positions Met-1 to Pro-13 are enriched in polar residues. The tract at residues Met-1–Met-31 is disordered. Positions Asn-14–Met-31 are enriched in low complexity.

This sequence belongs to the hssA/B family.

This Dictyostelium discoideum (Social amoeba) protein is HssA/B-like protein 55 (hssl55).